A 938-amino-acid polypeptide reads, in one-letter code: Isoleucine--tRNA ligase (938 aa).

The short motif at Pro58–His68 is the 'HIGH' region element. Glu562 contributes to the L-isoleucyl-5'-AMP binding site. The 'KMSKS' region motif lies at Lys603–Ser607. Lys606 is an ATP binding site. Zn(2+) contacts are provided by Cys901, Cys904, Cys921, and Cys924.

Belongs to the class-I aminoacyl-tRNA synthetase family. IleS type 1 subfamily. As to quaternary structure, monomer. Zn(2+) serves as cofactor.

The protein localises to the cytoplasm. The catalysed reaction is tRNA(Ile) + L-isoleucine + ATP = L-isoleucyl-tRNA(Ile) + AMP + diphosphate. In terms of biological role, catalyzes the attachment of isoleucine to tRNA(Ile). As IleRS can inadvertently accommodate and process structurally similar amino acids such as valine, to avoid such errors it has two additional distinct tRNA(Ile)-dependent editing activities. One activity is designated as 'pretransfer' editing and involves the hydrolysis of activated Val-AMP. The other activity is designated 'posttransfer' editing and involves deacylation of mischarged Val-tRNA(Ile). The chain is Isoleucine--tRNA ligase from Glaesserella parasuis serovar 5 (strain SH0165) (Haemophilus parasuis).